The following is a 91-amino-acid chain: Small ribosomal subunit protein uS19 (91 aa).

It belongs to the universal ribosomal protein uS19 family.

Functionally, protein S19 forms a complex with S13 that binds strongly to the 16S ribosomal RNA. This is Small ribosomal subunit protein uS19 from Ralstonia nicotianae (strain ATCC BAA-1114 / GMI1000) (Ralstonia solanacearum).